A 290-amino-acid chain; its full sequence is RxLR effector protein Avr4 (290 aa).

Residues 1–24 form the signal peptide; it reads MRSLHILLVITASLLASLAVSAEA. Residues 33 to 56 form a disordered region; sequence VVENNKDKSRFLRDGGTTEAQTDE. Residues 36 to 45 are compositionally biased toward basic and acidic residues; that stretch reads NNKDKSRFLR. A RxLR-dEER motif is present at residues 42–58; sequence RFLRDGGTTEAQTDEER. The interval 118-141 is W1 motif; that stretch reads KYERMQWQKLNEGQTLTYMRVGDR. The interval 151–174 is W2 motif; it reads QLLRWVAQKKTVKSVYDDLQIEGF. The tract at residues 224–247 is W3 motif; that stretch reads VFEKWAMEGTHIKSVIKTLNLNNK. N-linked (GlcNAc...) asparagine glycosylation occurs at asparagine 246. Positions 249 to 270 are y motif; the sequence is ASEMANNENFPALLKYVKLYLD.

Belongs to the RxLR effector family.

The protein localises to the secreted. The protein resides in the host cytoplasm. Its subcellular location is the host nucleus. It is found in the host nucleolus. It localises to the host cytoskeleton. In terms of biological role, secreted effector that acts as an elicitor of hypersensitive response (HR) specifically on plants carrying defense protein R4, through its interaction with this protein. This chain is RxLR effector protein Avr4, found in Phytophthora mirabilis.